Here is a 275-residue protein sequence, read N- to C-terminus: Fructose-2,6-bisphosphatase TIGAR (275 aa).

Histidine 11 acts as the Tele-phosphohistidine intermediate in catalysis. The active-site Proton donor/acceptor is the glutamate 89.

It belongs to the phosphoglycerate mutase family.

It is found in the cytoplasm. The protein localises to the nucleus. Its subcellular location is the mitochondrion. It carries out the reaction beta-D-fructose 2,6-bisphosphate + H2O = beta-D-fructose 6-phosphate + phosphate. Functionally, fructose-bisphosphatase hydrolyzing fructose-2,6-bisphosphate as well as fructose-1,6-bisphosphate. Acts as a negative regulator of glycolysis by lowering intracellular levels of fructose-2,6-bisphosphate in a p53/TP53-dependent manner, resulting in the pentose phosphate pathway (PPP) activation and NADPH production. Contributes to the generation of reduced glutathione to cause a decrease in intracellular reactive oxygen species (ROS) content, correlating with its ability to protect cells from oxidative or metabolic stress-induced cell death. May play a role in mitophagy inhibition. The polypeptide is Fructose-2,6-bisphosphatase TIGAR (Xenopus tropicalis (Western clawed frog)).